A 117-amino-acid chain; its full sequence is Early E3 13.3 kDa protein (117 aa).

The polypeptide is Early E3 13.3 kDa protein (Canine adenovirus serotype 1 (strain Glaxo) (CAdV-1)).